The primary structure comprises 708 residues: Solute carrier family 15 member 1 (708 aa).

The helical transmembrane segment at 1–21 threads the bilayer; that stretch reads MGMSKSHSFFGYPLSIFFIVV. Residues 22 to 53 are Extracellular-facing; sequence NEFCERFSYYGMRAILILYFTNFISWDDNLST. A glycan (N-linked (GlcNAc...) asparagine) is linked at N50. The chain crosses the membrane as a helical span at residues 54 to 74; the sequence is AIYHTFVALCYLTPILGALIA. At 75 to 82 the chain is on the cytoplasmic side; that stretch reads DSWLGKFK. Residues 83 to 103 traverse the membrane as a helical segment; the sequence is TIVSLSIVYTIGQAVTSVSSI. The Extracellular portion of the chain corresponds to 104–118; sequence NDLTDHNHDGTPDSL. A helical membrane pass occupies residues 119 to 139; that stretch reads PVHVVLSLIGLALIALGTGGI. Topologically, residues 140-161 are cytoplasmic; the sequence is KPCVSAFGGDQFEEGQEKQRNR. Residues 162-182 traverse the membrane as a helical segment; that stretch reads FFSIFYLAINAGSLLSTIITP. Residues 183-198 are Extracellular-facing; sequence MLRVQQCGIHSKQACY. The helical transmembrane segment at 199–219 threads the bilayer; the sequence is PLAFGVPAALMAVALIVFVLG. The Cytoplasmic portion of the chain corresponds to 220–276; sequence SGMYKKFKPQGNIMGKVAKCIGFAIKNRFRHRSKAFPKREHWLDWAKEKYDERLISQ. The helical transmembrane segment at 277-297 threads the bilayer; the sequence is IKMVTRVMFLYIPLPMFWALF. The Extracellular segment spans residues 298–327; sequence DQQGSRWTLQATTMSGKIGALEIQPDQMQT. Residues 328–348 form a helical membrane-spanning segment; sequence VNAILIVIMVPIFDAVLYPLI. At 349 to 361 the chain is on the cytoplasmic side; sequence AKCGFNFTSLKKM. A helical transmembrane segment spans residues 362 to 382; sequence AVGMVLASMAFVVAAIVQVEI. At 383–584 the chain is on the extracellular side; the sequence is DKTLPVFPKG…SANTVNMALQ (202 aa). The extracellular domain (ECD) stretch occupies residues 383–584; sequence DKTLPVFPKG…SANTVNMALQ (202 aa). 6 N-linked (GlcNAc...) asparagine glycosylation sites follow: N404, N408, N439, N509, N514, and N562. The chain crosses the membrane as a helical span at residues 585–605; sequence IPQYFLLTCGEVVFSVTGLEF. Residues 606-619 are Cytoplasmic-facing; that stretch reads SYSQAPSNMKSVLQ. Residues 620-640 form a helical membrane-spanning segment; the sequence is AGWLLTVAVGNIIVLIVAGAG. At 641–645 the chain is on the extracellular side; it reads QFSKQ. Residues 646–666 traverse the membrane as a helical segment; the sequence is WAEYILFAALLLVVCVIFAIM. The Cytoplasmic segment spans residues 667–708; the sequence is ARFYTYINPAEIEAQFDEDEKKNRLEKSNPYFMSGANSQKQM.

Belongs to the major facilitator superfamily. Proton-dependent oligopeptide transporter (POT/PTR) (TC 2.A.17) family. Interacts (via extracellular domain region) with trypsin. As to expression, expressed in small intestine.

It is found in the apical cell membrane. It carries out the reaction a dipeptide(out) + H(+)(out) = a dipeptide(in) + H(+)(in). The enzyme catalyses an L-amino acid tripeptide(out) + H(+)(out) = an L-amino acid tripeptide(in) + H(+)(in). It catalyses the reaction L-alanyl-L-lysine(out) + H(+)(out) = L-alanyl-L-lysine(in) + H(+)(in). The catalysed reaction is L-alanyl-L-proline(out) + H(+)(out) = L-alanyl-L-proline(in) + H(+)(in). It carries out the reaction L-alanyl-L-valine(out) + H(+)(out) = L-alanyl-L-valine(in) + H(+)(in). The enzyme catalyses carnosine(out) + H(+)(out) = carnosine(in) + H(+)(in). It catalyses the reaction glycyl-L-glutamine(out) + H(+)(out) = glycyl-L-glutamine(in) + H(+)(in). The catalysed reaction is glycyl-L-leucine(out) + H(+)(out) = glycyl-L-leucine(in) + H(+)(in). It carries out the reaction glycyl-L-proline(out) + H(+)(out) = glycyl-L-proline(in) + H(+)(in). The enzyme catalyses glycyl-sarcosine(out) + H(+)(out) = glycyl-sarcosine(in) + H(+)(in). It catalyses the reaction L-leucyl-L-leucine(out) + H(+)(out) = L-leucyl-L-leucine(in) + H(+)(in). The catalysed reaction is L-leucyl-L-proline(out) + H(+)(out) = L-leucyl-L-proline(in) + H(+)(in). It carries out the reaction L-phenylalanyl-L-leucine(out) + H(+)(out) = L-phenylalanyl-L-leucine(in) + H(+)(in). The enzyme catalyses L-phenylalanyl-L-phenylalanine(out) + H(+)(out) = L-phenylalanyl-L-phenylalanine(in) + H(+)(in). It catalyses the reaction L-lysyl-glycine(out) + H(+)(out) = L-lysyl-glycine(in) + H(+)(in). The catalysed reaction is L-tyrosylglycine(out) + H(+)(out) = L-tyrosylglycine(in) + H(+)(in). It carries out the reaction L-alanyl-L-aspartate(out) + 2 H(+)(out) = L-alanyl-L-aspartate(in) + 2 H(+)(in). The enzyme catalyses L-aspartyl-glycine(out) + 2 H(+)(out) = L-aspartyl-glycine(in) + 2 H(+)(in). It catalyses the reaction glycyl-L-aspartate(out) + 2 H(+)(out) = glycyl-L-aspartate(in) + 2 H(+)(in). The catalysed reaction is glycyl-L-glutamate(out) + 2 H(+)(out) = glycyl-L-glutamate(in) + 2 H(+)(in). It carries out the reaction L-alanyl-L-leucyl-L-alanine(out) + H(+)(out) = L-alanyl-L-leucyl-L-alanine(in) + H(+)(in). The enzyme catalyses L-alanyl-L-prolylglycine(out) + H(+)(out) = L-alanyl-L-prolylglycine(in) + H(+)(in). It catalyses the reaction glycylglycyl-L-isoleucine(out) + H(+)(out) = glycylglycyl-L-isoleucine(in) + H(+)(in). The catalysed reaction is glycylglycyl-L-proline(out) + H(+)(out) = glycylglycyl-L-proline(in) + H(+)(in). It carries out the reaction L-methionyl-L-phenylalanyl-L-methionine(out) + H(+)(out) = L-methionyl-L-phenylalanyl-L-methionine(in) + H(+)(in). The enzyme catalyses N-acetyl-D-muramoyl-L-alanyl-D-isoglutamine(out) + 2 H(+)(out) = N-acetyl-D-muramoyl-L-alanyl-D-isoglutamine(in) + 2 H(+)(in). It catalyses the reaction N(alpha)-formyl-L-methionyl-L-leucyl-L-phenylalanine(out) + 2 H(+)(out) = N(alpha)-formyl-L-methionyl-L-leucyl-L-phenylalanine(in) + 2 H(+)(in). In terms of biological role, electrogenic proton-coupled amino-acid transporter that transports oligopeptides of 2 to 4 amino acids with a preference for dipeptides. Transports neutral and monovalently charged peptides with a proton to peptide stoichiometry of 1:1 or 2:1. Primarily responsible for the absorption of dietary di- and tripeptides from the small intestinal lumen. Mediates transepithelial transport of muramyl and N-formylated bacterial dipeptides contributing to recognition of pathogenic bacteria by the mucosal immune system. The polypeptide is Solute carrier family 15 member 1 (Homo sapiens (Human)).